The following is a 195-amino-acid chain: FMN-dependent NADH:quinone oxidoreductase (195 aa).

FMN contacts are provided by residues Ser10, 16-18 (SQS), and 91-94 (MYNF).

This sequence belongs to the azoreductase type 1 family. In terms of assembly, homodimer. Requires FMN as cofactor.

It catalyses the reaction 2 a quinone + NADH + H(+) = 2 a 1,4-benzosemiquinone + NAD(+). The catalysed reaction is N,N-dimethyl-1,4-phenylenediamine + anthranilate + 2 NAD(+) = 2-(4-dimethylaminophenyl)diazenylbenzoate + 2 NADH + 2 H(+). Its function is as follows. Quinone reductase that provides resistance to thiol-specific stress caused by electrophilic quinones. In terms of biological role, also exhibits azoreductase activity. Catalyzes the reductive cleavage of the azo bond in aromatic azo compounds to the corresponding amines. This is FMN-dependent NADH:quinone oxidoreductase from Aeromonas salmonicida (strain A449).